The sequence spans 120 residues: ATP-dependent Clp protease adapter protein ClpS (120 aa).

Residues 1-20 form a disordered region; the sequence is MATKSPVNPKVPLVQEPDRD.

It belongs to the ClpS family. In terms of assembly, binds to the N-terminal domain of the chaperone ClpA.

Functionally, involved in the modulation of the specificity of the ClpAP-mediated ATP-dependent protein degradation. This Albidiferax ferrireducens (strain ATCC BAA-621 / DSM 15236 / T118) (Rhodoferax ferrireducens) protein is ATP-dependent Clp protease adapter protein ClpS.